The chain runs to 131 residues: Histone H2A.2 (131 aa).

Ser2 is subject to N-acetylserine. An N6-acetyllysine mark is found at Lys5 and Lys8. N5-methylglutamine is present on Gln106. Ser128 bears the Phosphoserine mark. The [ST]-Q motif signature appears at 128–129 (SQ).

Belongs to the histone H2A family. In terms of assembly, the nucleosome is a histone octamer containing two molecules each of H2A, H2B, H3 and H4 assembled in one H3-H4 heterotetramer and two H2A-H2B heterodimers. The octamer wraps approximately 147 bp of DNA. Phosphorylated to form H2AS128ph (gamma-H2A) in response to DNA double-strand breaks (DSBs) generated by exogenous genotoxic agents and by stalled replication forks. Phosphorylation is dependent on the DNA damage checkpoint kinases MEC1/ATR and TEL1/ATM, spreads on either side of a detected DSB site and may mark the surrounding chromatin for recruitment of proteins required for DNA damage signaling and repair. Gamma-H2A is removed from the DNA prior to the strand invasion-primer extension step of the repair process and subsequently dephosphorylated by PPH3, a component of the histone H2A phosphatase complex (HTP-C). Dephosphorylation is necessary for efficient recovery from the DNA damage checkpoint. Post-translationally, acetylated by ESA1 to form H2AK4ac and H2AK7ac.

It is found in the nucleus. It localises to the chromosome. Functionally, core component of nucleosome which plays a central role in DNA double strand break (DSB) repair. Nucleosomes wrap and compact DNA into chromatin, limiting DNA accessibility to the cellular machineries which require DNA as a template. Histones thereby play a central role in transcription regulation, DNA repair, DNA replication and chromosomal stability. DNA accessibility is regulated via a complex set of post-translational modifications of histones, also called histone code, and nucleosome remodeling. This Candida glabrata (strain ATCC 2001 / BCRC 20586 / JCM 3761 / NBRC 0622 / NRRL Y-65 / CBS 138) (Yeast) protein is Histone H2A.2 (HTA2).